Reading from the N-terminus, the 319-residue chain is Beta-ketoacyl-[acyl-carrier-protein] synthase III (319 aa).

Active-site residues include Cys-115 and His-246. An ACP-binding region spans residues 247 to 251 (QANLR). Asn-276 is an active-site residue.

Belongs to the thiolase-like superfamily. FabH family. In terms of assembly, homodimer.

Its subcellular location is the cytoplasm. It carries out the reaction malonyl-[ACP] + acetyl-CoA + H(+) = 3-oxobutanoyl-[ACP] + CO2 + CoA. Its pathway is lipid metabolism; fatty acid biosynthesis. Functionally, catalyzes the condensation reaction of fatty acid synthesis by the addition to an acyl acceptor of two carbons from malonyl-ACP. Catalyzes the first condensation reaction which initiates fatty acid synthesis and may therefore play a role in governing the total rate of fatty acid production. Possesses both acetoacetyl-ACP synthase and acetyl transacylase activities. Its substrate specificity determines the biosynthesis of branched-chain and/or straight-chain of fatty acids. This chain is Beta-ketoacyl-[acyl-carrier-protein] synthase III, found in Coxiella burnetii (strain RSA 493 / Nine Mile phase I).